The primary structure comprises 471 residues: Glutamate--tRNA ligase 1 (471 aa).

Residues 15–25 carry the 'HIGH' region motif; sequence PSPTGYLHIGG. Positions 243–247 match the 'KMSKS' region motif; sequence KLSKR. Lys-246 serves as a coordination point for ATP.

The protein belongs to the class-I aminoacyl-tRNA synthetase family. Glutamate--tRNA ligase type 1 subfamily. As to quaternary structure, monomer.

It is found in the cytoplasm. It carries out the reaction tRNA(Glu) + L-glutamate + ATP = L-glutamyl-tRNA(Glu) + AMP + diphosphate. Its function is as follows. Catalyzes the attachment of glutamate to tRNA(Glu) in a two-step reaction: glutamate is first activated by ATP to form Glu-AMP and then transferred to the acceptor end of tRNA(Glu). The protein is Glutamate--tRNA ligase 1 of Cereibacter sphaeroides (strain ATCC 17029 / ATH 2.4.9) (Rhodobacter sphaeroides).